The following is a 31-amino-acid chain: Cytochrome b6-f complex subunit 6 (31 aa).

A helical transmembrane segment spans residues 3–23 (TITSYFGFLLAVLTITSGLFI).

The protein belongs to the PetL family. As to quaternary structure, the 4 large subunits of the cytochrome b6-f complex are cytochrome b6, subunit IV (17 kDa polypeptide, PetD), cytochrome f and the Rieske protein, while the 4 small subunits are PetG, PetL, PetM and PetN. The complex functions as a dimer.

The protein resides in the plastid. The protein localises to the chloroplast thylakoid membrane. Component of the cytochrome b6-f complex, which mediates electron transfer between photosystem II (PSII) and photosystem I (PSI), cyclic electron flow around PSI, and state transitions. PetL is important for photoautotrophic growth as well as for electron transfer efficiency and stability of the cytochrome b6-f complex. The chain is Cytochrome b6-f complex subunit 6 from Lotus japonicus (Lotus corniculatus var. japonicus).